Consider the following 319-residue polypeptide: Acetyl-coenzyme A carboxylase carboxyl transferase subunit alpha (319 aa).

The 262-residue stretch at 32–293 folds into the CoA carboxyltransferase C-terminal domain; sequence NVDIEVRALE…KAVLLNELEA (262 aa).

This sequence belongs to the AccA family. Acetyl-CoA carboxylase is a heterohexamer composed of biotin carboxyl carrier protein (AccB), biotin carboxylase (AccC) and two subunits each of ACCase subunit alpha (AccA) and ACCase subunit beta (AccD).

The protein localises to the cytoplasm. It carries out the reaction N(6)-carboxybiotinyl-L-lysyl-[protein] + acetyl-CoA = N(6)-biotinyl-L-lysyl-[protein] + malonyl-CoA. The protein operates within lipid metabolism; malonyl-CoA biosynthesis; malonyl-CoA from acetyl-CoA: step 1/1. Component of the acetyl coenzyme A carboxylase (ACC) complex. First, biotin carboxylase catalyzes the carboxylation of biotin on its carrier protein (BCCP) and then the CO(2) group is transferred by the carboxyltransferase to acetyl-CoA to form malonyl-CoA. The polypeptide is Acetyl-coenzyme A carboxylase carboxyl transferase subunit alpha (Xylella fastidiosa (strain Temecula1 / ATCC 700964)).